Consider the following 336-residue polypeptide: MLYRLARAGFFQLDAEKAHDLAISNFKRFTGTPFDLFYRQQLPHRPVQCMGLTFKNPVGLAAGLDKNGECIEAFGAMGFGFVEVGTVTPRPQAGNDKPRLFRLVHAEGIINRMGFNNLGVDHLVENVKRAKYDGIIGINIGKNKDTPIEKGAEDYLICMDKVYPYAGYIAVNISSPNTPGLRSLQYGEALDELLAALKTRQAELAAKHDKYVPLALKIAPDLSDDEIQQICQSLLKNKIDSVIATNTTLDRSLVEGMKFANEAGGLSGRPLQNRSTEVIKCLYKELGEEIPIIGVGGIDSYISAKEKLLAGAKLVQVYSGFIYQGPGLVADIVKNL.

FMN contacts are provided by residues 62-66 (AGLDK) and Thr86. Lys66 lines the substrate pocket. 111–115 (NRMGF) is a substrate binding site. The FMN site is built by Asn139 and Asn172. Residue Asn172 coordinates substrate. Ser175 functions as the Nucleophile in the catalytic mechanism. A substrate-binding site is contributed by Asn177. FMN is bound by residues Lys217 and Thr245. 246–247 (NT) serves as a coordination point for substrate. FMN-binding positions include Gly268, Gly297, and 318-319 (YS).

It belongs to the dihydroorotate dehydrogenase family. Type 2 subfamily. Monomer. FMN is required as a cofactor.

It is found in the cell membrane. It carries out the reaction (S)-dihydroorotate + a quinone = orotate + a quinol. It functions in the pathway pyrimidine metabolism; UMP biosynthesis via de novo pathway; orotate from (S)-dihydroorotate (quinone route): step 1/1. In terms of biological role, catalyzes the conversion of dihydroorotate to orotate with quinone as electron acceptor. In Vibrio cholerae serotype O1 (strain ATCC 39541 / Classical Ogawa 395 / O395), this protein is Dihydroorotate dehydrogenase (quinone).